The sequence spans 379 residues: Small ribosomal subunit protein uS2cy (379 aa).

An N-terminal extension region spans residues 1 to 94 (MKLVQFFEIG…MGTSSNRAKS (94 aa)). The segment at 83-106 (NQMGTSSNRAKSTDTPAVSTSQNV) is disordered.

The protein belongs to the universal ribosomal protein uS2 family.

It is found in the plastid. Its subcellular location is the chloroplast. The sequence is that of Small ribosomal subunit protein uS2cy (rps2-2) from Tetradesmus obliquus (Green alga).